Reading from the N-terminus, the 256-residue chain is uncharacterized protein (256 aa).

The first 22 residues, 1 to 22, serve as a signal peptide directing secretion; sequence MNNFRQCALCIGTSVLILLVSG. Cys23 carries N-palmitoyl cysteine lipidation. Residue Cys23 is the site of S-diacylglycerol cysteine attachment.

This sequence belongs to the staphylococcal tandem lipoprotein family.

The protein localises to the cell membrane. This is an uncharacterized protein from Staphylococcus aureus (strain bovine RF122 / ET3-1).